The following is a 1395-amino-acid chain: uncharacterized protein (1395 aa).

ATP is bound at residue 89 to 96 (AYKKWGKS). Disordered regions lie at residues 146-166 (EEKI…LSPP) and 205-391 (SSSS…MENR). Composition is skewed to low complexity over residues 155 to 166 (GSPSPEAELSPP) and 205 to 222 (SSSS…TSSP). The segment covering 230-269 (EVTKERSSEVPTTVHEKTQSKSKNEKENKFSNGTIEEKPA) has biased composition (basic and acidic residues). The span at 287–301 (SWSSGSSEAGSSSSG) shows a compositional bias: low complexity. Basic residues predominate over residues 313 to 328 (VKVRHKAREIRNKKGR). Positions 337 to 346 (KHGEKAERNI) are enriched in basic and acidic residues. Residues 349–358 (GSSSSSSSGS) show a composition bias toward low complexity. Residues 369 to 391 (PLKEIGRKDPGSTEGKDLYMENR) show a composition bias toward basic and acidic residues. Phosphoserine is present on residues serine 814 and serine 1080. The tract at residues 1110–1132 (PISASELSPGGGSESEFESEKDE) is disordered. Serine 1194 and serine 1338 each carry phosphoserine. Positions 1346 to 1359 (TGERDSGAKSDGFR) are enriched in basic and acidic residues. The tract at residues 1346–1395 (TGERDSGAKSDGFRGKMCSSASSTSEETGSEGGGEWVGPSEEELFSRTHL) is disordered.

This is an uncharacterized protein from Homo sapiens (Human).